The sequence spans 177 residues: Large ribosomal subunit protein uL6 (177 aa).

The protein belongs to the universal ribosomal protein uL6 family. Part of the 50S ribosomal subunit.

Functionally, this protein binds to the 23S rRNA, and is important in its secondary structure. It is located near the subunit interface in the base of the L7/L12 stalk, and near the tRNA binding site of the peptidyltransferase center. The sequence is that of Large ribosomal subunit protein uL6 from Zymomonas mobilis subsp. mobilis (strain ATCC 31821 / ZM4 / CP4).